Here is a 109-residue protein sequence, read N- to C-terminus: MQAIHNDKSLLSPFSELNTDNRTKREESGSTFKEQKGGEFSKLLKQSINELNNTQEQSDKALADMATGQIKDLHQAAIAIGKAETSMKLMLEVRNKAISAYKELLRTQI.

The tract at residues 1–38 (MQAIHNDKSLLSPFSELNTDNRTKREESGSTFKEQKGG) is disordered. A compositionally biased stretch (basic and acidic residues) spans 19–38 (TDNRTKREESGSTFKEQKGG).

It belongs to the FliE family.

It localises to the bacterial flagellum basal body. The polypeptide is Flagellar hook-basal body complex protein FliE (Helicobacter pylori (strain P12)).